A 430-amino-acid polypeptide reads, in one-letter code: Serine--tRNA ligase (430 aa).

231–233 (TSE) is an L-serine binding site. 262–264 (RSE) is a binding site for ATP. Glutamate 285 provides a ligand contact to L-serine. 349-352 (EISS) contributes to the ATP binding site. Serine 385 provides a ligand contact to L-serine.

This sequence belongs to the class-II aminoacyl-tRNA synthetase family. Type-1 seryl-tRNA synthetase subfamily. In terms of assembly, homodimer. The tRNA molecule binds across the dimer.

Its subcellular location is the cytoplasm. The catalysed reaction is tRNA(Ser) + L-serine + ATP = L-seryl-tRNA(Ser) + AMP + diphosphate + H(+). The enzyme catalyses tRNA(Sec) + L-serine + ATP = L-seryl-tRNA(Sec) + AMP + diphosphate + H(+). The protein operates within aminoacyl-tRNA biosynthesis; selenocysteinyl-tRNA(Sec) biosynthesis; L-seryl-tRNA(Sec) from L-serine and tRNA(Sec): step 1/1. In terms of biological role, catalyzes the attachment of serine to tRNA(Ser). Is also able to aminoacylate tRNA(Sec) with serine, to form the misacylated tRNA L-seryl-tRNA(Sec), which will be further converted into selenocysteinyl-tRNA(Sec). This chain is Serine--tRNA ligase, found in Jannaschia sp. (strain CCS1).